Here is a 106-residue protein sequence, read N- to C-terminus: UPF0449 protein C19orf25 homolog (106 aa).

The protein belongs to the UPF0449 family.

The polypeptide is UPF0449 protein C19orf25 homolog (Xenopus tropicalis (Western clawed frog)).